Consider the following 402-residue polypeptide: Dual-specificity RNA methyltransferase RlmN (402 aa).

Catalysis depends on glutamate 94, which acts as the Proton acceptor. The Radical SAM core domain occupies 100-351; that stretch reads EDDRGTLCIS…ATVRKTRGDD (252 aa). Residues cysteine 107 and cysteine 356 are joined by a disulfide bond. [4Fe-4S] cluster is bound by residues cysteine 114, cysteine 118, and cysteine 121. Residues 182-183, serine 214, 236-238, and asparagine 313 each bind S-adenosyl-L-methionine; these read GE and SLH. Catalysis depends on cysteine 356, which acts as the S-methylcysteine intermediate.

It belongs to the radical SAM superfamily. RlmN family. [4Fe-4S] cluster is required as a cofactor.

It is found in the cytoplasm. The catalysed reaction is adenosine(2503) in 23S rRNA + 2 reduced [2Fe-2S]-[ferredoxin] + 2 S-adenosyl-L-methionine = 2-methyladenosine(2503) in 23S rRNA + 5'-deoxyadenosine + L-methionine + 2 oxidized [2Fe-2S]-[ferredoxin] + S-adenosyl-L-homocysteine. It catalyses the reaction adenosine(37) in tRNA + 2 reduced [2Fe-2S]-[ferredoxin] + 2 S-adenosyl-L-methionine = 2-methyladenosine(37) in tRNA + 5'-deoxyadenosine + L-methionine + 2 oxidized [2Fe-2S]-[ferredoxin] + S-adenosyl-L-homocysteine. In terms of biological role, specifically methylates position 2 of adenine 2503 in 23S rRNA and position 2 of adenine 37 in tRNAs. m2A2503 modification seems to play a crucial role in the proofreading step occurring at the peptidyl transferase center and thus would serve to optimize ribosomal fidelity. The polypeptide is Dual-specificity RNA methyltransferase RlmN (Polynucleobacter asymbioticus (strain DSM 18221 / CIP 109841 / QLW-P1DMWA-1) (Polynucleobacter necessarius subsp. asymbioticus)).